We begin with the raw amino-acid sequence, 778 residues long: pH-response regulator protein palH/prr-4 (778 aa).

Over methionine 1–glutamine 108 the chain is Extracellular. Residues cysteine 109–threonine 129 form a helical membrane-spanning segment. Topologically, residues proline 130–tryptophan 160 are periplasmic. A helical transmembrane segment spans residues leucine 161–phenylalanine 181. At arginine 182–aspartate 201 the chain is on the extracellular side. A helical transmembrane segment spans residues valine 202 to alanine 222. The Periplasmic segment spans residues glutamine 223–lysine 237. A helical membrane pass occupies residues valine 238–asparagine 258. At serine 259–alanine 275 the chain is on the extracellular side. The helical transmembrane segment at valine 276–leucine 296 threads the bilayer. Over tyrosine 297–asparagine 314 the chain is Periplasmic. The chain crosses the membrane as a helical span at residues methionine 315–leucine 335. The Extracellular portion of the chain corresponds to aspartate 336–aspartate 341. The helical transmembrane segment at phenylalanine 342–tryptophan 362 threads the bilayer. Residues glutamate 363–proline 778 are Periplasmic-facing. Disordered regions lie at residues alanine 394 to serine 499, glutamate 514 to serine 605, and glutamate 660 to proline 778. Basic and acidic residues predominate over residues histidine 446–proline 456. Residues asparagine 457–threonine 466 show a composition bias toward polar residues. Composition is skewed to basic and acidic residues over residues phenylalanine 588–serine 605 and leucine 661–arginine 675. Over residues proline 720–tyrosine 732 the composition is skewed to polar residues. A compositionally biased stretch (low complexity) spans alanine 749–serine 759. Residues arginine 769–proline 778 show a composition bias toward polar residues.

This sequence belongs to the palH/RIM21 family.

The protein localises to the cell membrane. Its function is as follows. Required for the proteolytic cleavage of the transcription factor pacc-1 in response to alkaline ambient pH. This Neurospora crassa (strain ATCC 24698 / 74-OR23-1A / CBS 708.71 / DSM 1257 / FGSC 987) protein is pH-response regulator protein palH/prr-4 (prr-4).